A 315-amino-acid polypeptide reads, in one-letter code: Olfactory receptor 2V2 (315 aa).

Residues 1-26 (METWVNQSYTDGFFLLGIFSHSTADL) lie on the Extracellular side of the membrane. An N-linked (GlcNAc...) asparagine glycan is attached at asparagine 6. The helical transmembrane segment at 27–50 (VLFSVVMAVFTVALCGNVLLIFLI) threads the bilayer. Over 51–58 (YMDPHLHT) the chain is Cytoplasmic. A helical transmembrane segment spans residues 59–80 (PMYFFLSQLSLMDLMLVCTNVP). The Extracellular portion of the chain corresponds to 81–101 (KMAANFLSGRKSISFVGCGIQ). An intrachain disulfide couples cysteine 98 to cysteine 190. A helical transmembrane segment spans residues 102-121 (IGLFVCLVGSEGLLLGLMAY). Over 122–140 (DRYVAISHPLHYPILMNQR) the chain is Cytoplasmic. The helical transmembrane segment at 141-159 (VCLQITGSSWAFGIIDGLI) threads the bilayer. Residues 160–196 (QMVVVMNFPYCGLRKVNHFFCEMLSLLKLACVDTSLF) are Extracellular-facing. The helical transmembrane segment at 197-220 (EKVIFACCVFMLLFPFSIIVASYA) threads the bilayer. The Cytoplasmic segment spans residues 221-237 (HILGTVLQMHSAQAWKK). The helical transmembrane segment at 238–260 (ALATCSSHLTAVTLFYGAAMFIY) threads the bilayer. Residues 261–273 (LRPRHYRAPSHDK) are Extracellular-facing. Residues 274–293 (VASIFYTVLTPMLNPLIYSL) form a helical membrane-spanning segment. Residues 294-315 (RNREVMGALRKGLDRCRIGSQH) lie on the Cytoplasmic side of the membrane.

It belongs to the G-protein coupled receptor 1 family.

It is found in the cell membrane. Odorant receptor. The sequence is that of Olfactory receptor 2V2 (OR2V2) from Homo sapiens (Human).